The sequence spans 353 residues: Biotin synthase (353 aa).

Over residues 1–22 (MTACSTTPTTSATSAQPAAGSP) the composition is skewed to low complexity. Residues 1 to 30 (MTACSTTPTTSATSAQPAAGSPLQWHARPS) form a disordered region. Positions 72–299 (GDIELATLLS…TARVRLSAGR (228 aa)) constitute a Radical SAM core domain. [4Fe-4S] cluster contacts are provided by C87, C91, and C94. Residues C131, C162, C222, and R294 each coordinate [2Fe-2S] cluster.

The protein belongs to the radical SAM superfamily. Biotin synthase family. As to quaternary structure, homodimer. Requires [4Fe-4S] cluster as cofactor. [2Fe-2S] cluster serves as cofactor.

It catalyses the reaction (4R,5S)-dethiobiotin + (sulfur carrier)-SH + 2 reduced [2Fe-2S]-[ferredoxin] + 2 S-adenosyl-L-methionine = (sulfur carrier)-H + biotin + 2 5'-deoxyadenosine + 2 L-methionine + 2 oxidized [2Fe-2S]-[ferredoxin]. The protein operates within cofactor biosynthesis; biotin biosynthesis; biotin from 7,8-diaminononanoate: step 2/2. In terms of biological role, catalyzes the conversion of dethiobiotin (DTB) to biotin by the insertion of a sulfur atom into dethiobiotin via a radical-based mechanism. This is Biotin synthase from Delftia acidovorans (strain DSM 14801 / SPH-1).